The chain runs to 108 residues: uncharacterized protein (108 aa).

Residues 25–45 (VILKSFLLISSWVILVLLLVI) traverse the membrane as a helical segment.

The protein resides in the membrane. This is an uncharacterized protein from Saccharomyces cerevisiae (strain ATCC 204508 / S288c) (Baker's yeast).